We begin with the raw amino-acid sequence, 338 residues long: tRNA N6-adenosine threonylcarbamoyltransferase (338 aa).

Residues His111 and His115 each coordinate Fe cation. Substrate-binding positions include 133-137 (LVSGG), Asp166, Gly179, Asp183, and Asn275. Asp300 provides a ligand contact to Fe cation.

Belongs to the KAE1 / TsaD family. It depends on Fe(2+) as a cofactor.

Its subcellular location is the cytoplasm. It carries out the reaction L-threonylcarbamoyladenylate + adenosine(37) in tRNA = N(6)-L-threonylcarbamoyladenosine(37) in tRNA + AMP + H(+). In terms of biological role, required for the formation of a threonylcarbamoyl group on adenosine at position 37 (t(6)A37) in tRNAs that read codons beginning with adenine. Is involved in the transfer of the threonylcarbamoyl moiety of threonylcarbamoyl-AMP (TC-AMP) to the N6 group of A37, together with TsaE and TsaB. TsaD likely plays a direct catalytic role in this reaction. The chain is tRNA N6-adenosine threonylcarbamoyltransferase from Treponema denticola (strain ATCC 35405 / DSM 14222 / CIP 103919 / JCM 8153 / KCTC 15104).